Reading from the N-terminus, the 642-residue chain is Conserved oligomeric Golgi complex subunit 6 (642 aa).

It belongs to the COG6 family. As to quaternary structure, component of the conserved oligomeric Golgi complex which is composed of eight different subunits and is required for normal Golgi morphology and localization.

It localises to the golgi apparatus membrane. Its function is as follows. Required for normal Golgi function. This chain is Conserved oligomeric Golgi complex subunit 6 (cogc-6), found in Caenorhabditis elegans.